A 1226-amino-acid chain; its full sequence is DNA-directed RNA polymerase subunit beta (1226 aa).

It belongs to the RNA polymerase beta chain family. As to quaternary structure, the RNAP catalytic core consists of 2 alpha, 1 beta, 1 beta' and 1 omega subunit. When a sigma factor is associated with the core the holoenzyme is formed, which can initiate transcription.

The enzyme catalyses RNA(n) + a ribonucleoside 5'-triphosphate = RNA(n+1) + diphosphate. Functionally, DNA-dependent RNA polymerase catalyzes the transcription of DNA into RNA using the four ribonucleoside triphosphates as substrates. The polypeptide is DNA-directed RNA polymerase subunit beta (Leptospira borgpetersenii serovar Hardjo-bovis (strain JB197)).